The following is a 357-amino-acid chain: Elongation factor Ts (357 aa).

Residues 82-85 (TDFV) are involved in Mg(2+) ion dislocation from EF-Tu.

This sequence belongs to the EF-Ts family.

The protein localises to the cytoplasm. In terms of biological role, associates with the EF-Tu.GDP complex and induces the exchange of GDP to GTP. It remains bound to the aminoacyl-tRNA.EF-Tu.GTP complex up to the GTP hydrolysis stage on the ribosome. This Campylobacter jejuni subsp. jejuni serotype O:2 (strain ATCC 700819 / NCTC 11168) protein is Elongation factor Ts.